We begin with the raw amino-acid sequence, 274 residues long: Large ribosomal subunit protein uL2cz/uL2cy (274 aa).

2 disordered regions span residues 1 to 22 (MAIN…DSQV) and 224 to 274 (NPVD…RRSK).

The protein belongs to the universal ribosomal protein uL2 family. In terms of assembly, part of the 50S ribosomal subunit.

The protein localises to the plastid. It localises to the chloroplast. In Helianthus annuus (Common sunflower), this protein is Large ribosomal subunit protein uL2cz/uL2cy (rpl2-A).